A 120-amino-acid chain; its full sequence is Large ribosomal subunit protein uL18 (120 aa).

The segment covering 1–10 (MKLTRRESKE) has biased composition (basic and acidic residues). Positions 1–26 (MKLTRRESKERRHRRVRGKVQGSPER) are disordered.

The protein belongs to the universal ribosomal protein uL18 family. Part of the 50S ribosomal subunit; part of the 5S rRNA/L5/L18/L25 subcomplex. Contacts the 5S and 23S rRNAs.

Functionally, this is one of the proteins that bind and probably mediate the attachment of the 5S RNA into the large ribosomal subunit, where it forms part of the central protuberance. In Nostoc sp. (strain PCC 7120 / SAG 25.82 / UTEX 2576), this protein is Large ribosomal subunit protein uL18.